Reading from the N-terminus, the 425-residue chain is Monoacylglycerol lipase ABHD2 (425 aa).

The Cytoplasmic segment spans residues 1-9 (MNAMLETPE). A helical; Signal-anchor for type II membrane protein membrane pass occupies residues 10-30 (LPAVFDGVKLAAVAAVLYVIV). At 31-425 (RCLNLKSPTA…DTEQVEADLE (395 aa)) the chain is on the extracellular side. The 255-residue stretch at 128 to 382 (MVICPGIANH…HGGHLGFFEG (255 aa)) folds into the AB hydrolase-1 domain. Residue asparagine 136 is glycosylated (N-linked (GlcNAc...) asparagine). Serine 207 (nucleophile) is an active-site residue. Residues aspartate 345 and histidine 376 each act as charge relay system in the active site.

The protein belongs to the AB hydrolase superfamily. AB hydrolase 4 family. As to expression, present in sperm (at protein level).

It is found in the cell projection. The protein resides in the cilium. It localises to the flagellum membrane. Its subcellular location is the cell membrane. It catalyses the reaction an acetyl ester + H2O = an aliphatic alcohol + acetate + H(+). The catalysed reaction is Hydrolyzes glycerol monoesters of long-chain fatty acids.. It carries out the reaction a triacylglycerol + H2O = a diacylglycerol + a fatty acid + H(+). The enzyme catalyses 2-(5Z,8Z,11Z,14Z-eicosatetraenoyl)-glycerol + H2O = glycerol + (5Z,8Z,11Z,14Z)-eicosatetraenoate + H(+). It catalyses the reaction a butanoate ester + H2O = an aliphatic alcohol + butanoate + H(+). The catalysed reaction is hexadecanoate ester + H2O = an aliphatic alcohol + hexadecanoate + H(+). With respect to regulation, acylglycerol lipase activity is activated upon binding to progesterone. In terms of biological role, progesterone-dependent acylglycerol lipase that catalyzes hydrolysis of endocannabinoid arachidonoylglycerol (AG) from cell membrane. Acts as a progesterone receptor: progesterone-binding activates the acylglycerol lipase activity, mediating degradation of 1-arachidonoylglycerol (1AG) and 2-arachidonoylglycerol (2AG) to glycerol and arachidonic acid (AA). Also displays an ester hydrolase activity against acetyl ester, butanoate ester and hexadecanoate ester. Plays a key role in sperm capacitation in response to progesterone by mediating degradation of 2AG, an inhibitor of the sperm calcium channel CatSper, leading to calcium influx via CatSper and sperm activation. May also play a role in smooth muscle cells migration. The sequence is that of Monoacylglycerol lipase ABHD2 from Homo sapiens (Human).